A 393-amino-acid chain; its full sequence is Leucine aminopeptidase 1 (393 aa).

The first 18 residues, 1–18, serve as a signal peptide directing secretion; that stretch reads MKLSQVSALAACVPAATA. A propeptide spanning residues 19–84 is cleaved from the precursor; the sequence is RFVELMEADH…GSQGLRIKES (66 aa). Residue Asn176 is glycosylated (N-linked (GlcNAc...) asparagine). Positions 184, 202, 241, and 268 each coordinate Zn(2+). A disulfide bridge connects residues Cys317 and Cys321. His350 is a binding site for Zn(2+).

The protein belongs to the peptidase M28 family. M28E subfamily. As to quaternary structure, monomer. It depends on Zn(2+) as a cofactor.

Its subcellular location is the secreted. In terms of biological role, extracellular aminopeptidase that allows assimilation of proteinaceous substrates. The sequence is that of Leucine aminopeptidase 1 (LAP1) from Metarhizium robertsii (strain ARSEF 23 / ATCC MYA-3075) (Metarhizium anisopliae (strain ARSEF 23)).